Consider the following 598-residue polypeptide: MVVHTGNRLNKLRELMKERGYTLYVVPSEDAHSSEYTCDADARRAFISGFDGSAGCAVIGETSAALFTDGRYFNQASQQLDENWTLMKQGFTGVPTWEEYCTQMTKCNEKVGIDSSLITFPAAKALRESLFLKSGAVLVGDHDNLVDIVWGASRPKEPLEKLIVQEIKYAGLGVDEKLHNLREAMKEQKIEAFVVSMLDEVAWLYNLRGADVPYNPVFFAYSLVTLDEAFLYVDERKVTPEVSKHLDGFVKILPYDRVFSDAKNSNLTRIGISSKTSWCIATSFGETKVMPILSPISQAKGIKNDAELKGMKECHIRDGCALVEYFAWLDEYLNSGNKINEFDAATKLEQFRRKNNLFMGLSFETISSTGPNGAVIHYSPPATGSAIIDPTKIYLCDSGAQYKDGTTDVTRTWHFGEPSEFERQTATLALKGHIALANIVFPKGTTGYMIDVLARQYLWKYGLDYLHGTGHGVGSFLNVHELPVGIGSREVFNSAPLQAGMVTSNEPGFYEDGHFGYRVENCVYITEVNTENRFAGRTYLGLKDLTLAPHCQKLIDPSLLSPEEVKYLNEYHSEVYTTLSPMLSVSAKKWLSKHTSPI.

4 residues coordinate Mn(2+): D397, D408, E506, and E520.

It belongs to the peptidase M24B family. Mn(2+) serves as cofactor.

This is an uncharacterized protein from Schizosaccharomyces pombe (strain 972 / ATCC 24843) (Fission yeast).